Consider the following 160-residue polypeptide: RxLR effector protein PexRD44 (160 aa).

A signal peptide spans 1–21 (MRLLLWVLISMLSIALSSCAA). A RxLR-dEER motif is present at residues 54 to 76 (RFLRGESSKIVNLKQEEGVFEER).

Belongs to the RxLR effector family.

The protein resides in the secreted. The protein localises to the host cell membrane. It is found in the host nucleus. Its subcellular location is the host nucleolus. Functionally, effector that is involved in host plant infection. Contributes to virulence during the early infection stage, by inhibiting plant defense responses induced by both PAMP-triggered immunity (PTI) and effector-triggered immunity (ETI). The chain is RxLR effector protein PexRD44 from Phytophthora infestans (strain T30-4) (Potato late blight agent).